An 85-amino-acid polypeptide reads, in one-letter code: MPRRILQGTVVSDKGDKTVIVLVERRVMHPVYKKFIKQSKKYAAHDEANAFKIGDVVQIEECRPISKRKRWTVVTGAAAEAGAAS.

It belongs to the universal ribosomal protein uS17 family. In terms of assembly, part of the 30S ribosomal subunit.

In terms of biological role, one of the primary rRNA binding proteins, it binds specifically to the 5'-end of 16S ribosomal RNA. The protein is Small ribosomal subunit protein uS17 of Rhodospirillum centenum (strain ATCC 51521 / SW).